The primary structure comprises 307 residues: Leucine-rich repeat-containing protein 59 (307 aa).

Position 1 is an N-acetylmethionine (methionine 1). Threonine 2 carries the post-translational modification N-acetylthreonine; in Leucine-rich repeat-containing protein 59, N-terminally processed. The Cytoplasmic segment spans residues 2-244; sequence TKTGSKGGNL…KPPPRKHNRS (243 aa). LRR repeat units follow at residues 10-31, 40-62, 63-84, 86-107, and 109-128; these read NLRD…NEVP, KATV…CGLT, HLVK…FGRL, NLQH…FAQL, and NLKW…AKVA. Serine 23 and serine 25 each carry phosphoserine. At lysine 73 the chain carries N6-succinyllysine. Lysine 135 is subject to N6-acetyllysine. A coiled-coil region spans residues 148–216; the sequence is MKAVQADQER…KASKREQEKK (69 aa). The interval 150–242 is disordered; the sequence is AVQADQERER…PRKPPPRKHN (93 aa). Over residues 154–221 the composition is skewed to basic and acidic residues; it reads DQERERQRRL…EQEKKPKKET (68 aa). Basic residues predominate over residues 229–242; it reads SGSRPRKPPPRKHN. The helical transmembrane segment at 245 to 265 threads the bilayer; that stretch reads WAVLKGLLLLLLLCVAGGLVV. At 266–307 the chain is on the lumenal side; it reads CRVTGLQQQPLCTSVNAIYDNAVQGLRHHEILQWVLQTDSQQ.

Can form homodimers. Interacts with SGO1. Interacts with FGF1.

It localises to the microsome membrane. It is found in the endoplasmic reticulum membrane. Its subcellular location is the nucleus envelope. In terms of biological role, required for nuclear import of FGF1, but not that of FGF2. Might regulate nuclear import of exogenous FGF1 by facilitating interaction with the nuclear import machinery and by transporting cytosolic FGF1 to, and possibly through, the nuclear pores. The chain is Leucine-rich repeat-containing protein 59 (Lrrc59) from Rattus norvegicus (Rat).